Consider the following 306-residue polypeptide: Secretory carrier-associated membrane protein 1 (306 aa).

A disordered region spans residues 1-66 (MAGRYDSNPF…LPPEPAAFGA (66 aa)). Residues 1 to 141 (MAGRYDSNPF…EIPSHLQRMQ (141 aa)) are Cytoplasmic-facing. The segment covering 25 to 36 (KAGGQPSYGGGA) has biased composition (gly residues). A compositionally biased stretch (low complexity) spans 40–55 (PNPRNVPSVSSNSRLS). A coiled-coil region spans residues 72 to 109 (LDSSKDLKNREKELQAREAELNKREKELKRREEAAARA). Helical transmembrane passes span 142 to 162 (YVAF…VIAV), 174 to 194 (IWLL…VLWY), 209 to 229 (FGLF…SAVA), and 257 to 277 (IFYF…IWVI). Topologically, residues 278 to 306 (QQVYMYFRGSGKAAEMKRDATRGAMRAAF) are cytoplasmic.

It belongs to the SCAMP family.

The protein localises to the cell membrane. Its subcellular location is the cytoplasmic vesicle. It localises to the secretory vesicle membrane. Its function is as follows. Probably involved in membrane trafficking. This is Secretory carrier-associated membrane protein 1 (SCAMP1) from Oryza sativa subsp. japonica (Rice).